The primary structure comprises 971 residues: Isoleucine--tRNA ligase (971 aa).

A 'HIGH' region motif is present at residues 64 to 74 (PYANGHIHIGH). E602 lines the L-isoleucyl-5'-AMP pocket. The 'KMSKS' region motif lies at 643–647 (KMSKS). K646 provides a ligand contact to ATP.

This sequence belongs to the class-I aminoacyl-tRNA synthetase family. IleS type 1 subfamily. As to quaternary structure, monomer.

It localises to the cytoplasm. It carries out the reaction tRNA(Ile) + L-isoleucine + ATP = L-isoleucyl-tRNA(Ile) + AMP + diphosphate. Catalyzes the attachment of isoleucine to tRNA(Ile). As IleRS can inadvertently accommodate and process structurally similar amino acids such as valine, to avoid such errors it has two additional distinct tRNA(Ile)-dependent editing activities. One activity is designated as 'pretransfer' editing and involves the hydrolysis of activated Val-AMP. The other activity is designated 'posttransfer' editing and involves deacylation of mischarged Val-tRNA(Ile). The sequence is that of Isoleucine--tRNA ligase from Bartonella quintana (strain Toulouse) (Rochalimaea quintana).